Reading from the N-terminus, the 246-residue chain is DNA repair protein RecO (246 aa).

It belongs to the RecO family.

Functionally, involved in DNA repair and RecF pathway recombination. The polypeptide is DNA repair protein RecO (Cutibacterium acnes (strain DSM 16379 / KPA171202) (Propionibacterium acnes)).